A 102-amino-acid polypeptide reads, in one-letter code: Cytochrome b (102 aa).

A run of 3 helical transmembrane segments spans residues 1–21 (FGSL…FLAM), 45–66 (WLIR…YMHI), and 81–101 (WNIG…GYVF). Positions 51 and 65 each coordinate heme b.

This sequence belongs to the cytochrome b family. The cytochrome bc1 complex contains 3 respiratory subunits (MT-CYB, CYC1 and UQCRFS1), 2 core proteins (UQCRC1 and UQCRC2) and probably 6 low-molecular weight proteins. Requires heme b as cofactor.

The protein localises to the mitochondrion inner membrane. In terms of biological role, component of the ubiquinol-cytochrome c reductase complex (complex III or cytochrome b-c1 complex) that is part of the mitochondrial respiratory chain. The b-c1 complex mediates electron transfer from ubiquinol to cytochrome c. Contributes to the generation of a proton gradient across the mitochondrial membrane that is then used for ATP synthesis. This chain is Cytochrome b (mt-cyb), found in Plethodon yonahlossee (Yonahlossee salamander).